A 307-amino-acid chain; its full sequence is Membrane protein insertase YidC 1 (307 aa).

A signal peptide spans M1–G22. The N-palmitoyl cysteine moiety is linked to residue C23. C23 carries S-diacylglycerol cysteine lipidation. Helical transmembrane passes span Y59–I79, G136–I156, L177–G197, T205–P225, and A226–I246. Residues E260–K307 form a disordered region.

Belongs to the OXA1/ALB3/YidC family. Type 2 subfamily.

It is found in the cell membrane. Its function is as follows. Required for the insertion and/or proper folding and/or complex formation of integral membrane proteins into the membrane. Involved in integration of membrane proteins that insert both dependently and independently of the Sec translocase complex, as well as at least some lipoproteins. The sequence is that of Membrane protein insertase YidC 1 from Lactiplantibacillus plantarum (strain ATCC BAA-793 / NCIMB 8826 / WCFS1) (Lactobacillus plantarum).